We begin with the raw amino-acid sequence, 210 residues long: Cytidylate kinase (210 aa).

An ATP-binding site is contributed by 7 to 15 (GPAASGKGT).

It belongs to the cytidylate kinase family. Type 1 subfamily.

It is found in the cytoplasm. The catalysed reaction is CMP + ATP = CDP + ADP. The enzyme catalyses dCMP + ATP = dCDP + ADP. This Methylobacterium sp. (strain 4-46) protein is Cytidylate kinase.